Here is a 200-residue protein sequence, read N- to C-terminus: Ras-related protein Rab-7b (200 aa).

Residues 15–22 (GALGVGKT), 34–40 (YEDYQTT), 63–67 (DTGGQ), 124–127 (NKID), and 154–155 (AK) each bind GTP. Short sequence motifs (switch) lie at residues 28–41 (YVHK…QTTL) and 67–82 (QERF…KGSD). S186 is modified (phosphoserine). Residues C199 and C200 are each lipidated (S-geranylgeranyl cysteine).

It belongs to the small GTPase superfamily. Rab family.

It is found in the late endosome. The protein resides in the lysosome. Its subcellular location is the golgi apparatus. It localises to the trans-Golgi network. The protein localises to the cytoplasmic vesicle. It is found in the phagosome. The protein resides in the phagosome membrane. Its function is as follows. Controls vesicular trafficking from endosomes to the trans-Golgi network (TGN). Acts as a negative regulator of TLR9 signaling and can suppress TLR9-triggered TNFA, IL6, and IFNB production in macrophages by promoting TLR9 lysosomal degradation. Also negatively regulates TLR4 signaling in macrophages by promoting lysosomal degradation of TLR4. Promotes megakaryocytic differentiation by increasing NF-kappa-B-dependent IL6 production and subsequently enhancing the association of STAT3 with GATA1. Not involved in the regulation of the EGF- and EGFR degradation pathway. The polypeptide is Ras-related protein Rab-7b (RAB7B) (Bos taurus (Bovine)).